We begin with the raw amino-acid sequence, 626 residues long: Chaperone protein HtpG (626 aa).

The tract at residues 1–339 (MSTNQETRGF…SNDLPLNVSR (339 aa)) is a; substrate-binding. The segment at 340–555 (EILQDNKVTA…NDQMTTQMAK (216 aa)) is b. Residues 556–626 (LFAAAGQPVP…FIKRINKLLG (71 aa)) form a c region.

This sequence belongs to the heat shock protein 90 family. In terms of assembly, homodimer.

The protein localises to the cytoplasm. In terms of biological role, molecular chaperone. Has ATPase activity. This is Chaperone protein HtpG from Aggregatibacter actinomycetemcomitans (Actinobacillus actinomycetemcomitans).